Reading from the N-terminus, the 256-residue chain is 6-carboxyhexanoate--CoA ligase (256 aa).

This sequence belongs to the BioW family. Homodimer. Mg(2+) is required as a cofactor.

It carries out the reaction heptanedioate + ATP + CoA = 6-carboxyhexanoyl-CoA + AMP + diphosphate. The protein operates within metabolic intermediate metabolism; pimeloyl-CoA biosynthesis; pimeloyl-CoA from pimelate: step 1/1. Catalyzes the transformation of pimelate into pimeloyl-CoA with concomitant hydrolysis of ATP to AMP. The polypeptide is 6-carboxyhexanoate--CoA ligase (Bacillus amyloliquefaciens (strain ATCC 23350 / DSM 7 / BCRC 11601 / CCUG 28519 / NBRC 15535 / NRRL B-14393 / F)).